A 243-amino-acid chain; its full sequence is PHO85 cyclin-like protein psl1 (243 aa).

Residues Glu211–Asp224 are compositionally biased toward polar residues. Positions Glu211–Ile231 are disordered.

The protein belongs to the cyclin family. PHO80 subfamily. As to quaternary structure, forms a cyclin-CDK complex with pef1.

It is found in the cytoplasm. Its subcellular location is the nucleus. Cyclin partner of the cyclin-dependent kinase (CDK) pef1 (PHO85 homolog). This Schizosaccharomyces pombe (strain 972 / ATCC 24843) (Fission yeast) protein is PHO85 cyclin-like protein psl1 (psl1).